The chain runs to 589 residues: Aspartate--tRNA ligase (589 aa).

Position 172 (Glu-172) interacts with L-aspartate. Residues 196–199 form an aspartate region; sequence QLFK. Residue Arg-218 coordinates L-aspartate. ATP contacts are provided by residues 218–220 and Gln-227; that span reads RDE. His-449 contacts L-aspartate. Glu-483 is an ATP binding site. An L-aspartate-binding site is contributed by Arg-490. Residue 535–538 coordinates ATP; it reads GLDR.

Belongs to the class-II aminoacyl-tRNA synthetase family. Type 1 subfamily. Homodimer.

Its subcellular location is the cytoplasm. It carries out the reaction tRNA(Asp) + L-aspartate + ATP = L-aspartyl-tRNA(Asp) + AMP + diphosphate. Its function is as follows. Catalyzes the attachment of L-aspartate to tRNA(Asp) in a two-step reaction: L-aspartate is first activated by ATP to form Asp-AMP and then transferred to the acceptor end of tRNA(Asp). The chain is Aspartate--tRNA ligase from Haemophilus ducreyi (strain 35000HP / ATCC 700724).